The sequence spans 448 residues: MNINAAPQILGRSSQDITPGYMSGFGNSFETEALPGALPVGRNSPQRCAYGLYAEQLSGSPFTAPRGANERSWLYRIRPSVKHSGRFAKTDMGLWRSAPCFEHDLPIAQLRWDPPPMPQEALTFLQGVRTMTTAGDVNTQAGMATHLYLITQSMVDQHFYNADGEMMFVPQQGSLRLVTEFGIITIEPAEIAVIPRGVKFRVELVDGPARGYLCENYGGAFTLPERGPIGANCLANSRDFLTPVAAYEDKDTPTELYVKWGGSLYVTKLPHSPIDVVAWHGNYAPYKYDLRTYSPVGAIGFDHPDPSIFTVLTSPSETPGTANIDFVIFPERWMVADNTFRPPWYHMNIMSEFMGLIYGVYDAKPQGFVPGGASLHNMMLPHGPDREAFDHASNGELKPVKLTGTMAFMFETRYPQRVTEYAASSGLLQDDYADCWNGLEKRFDPNRP.

Residue His303 is the Proton acceptor of the active site. Residues His346 and Glu352 each contribute to the Fe cation site. The homogentisate site is built by Tyr361 and His382. A Fe cation-binding site is contributed by His382.

This sequence belongs to the homogentisate dioxygenase family. As to quaternary structure, hexamer; dimer of trimers. Requires Fe cation as cofactor.

The catalysed reaction is homogentisate + O2 = 4-maleylacetoacetate + H(+). Its pathway is amino-acid degradation; L-phenylalanine degradation; acetoacetate and fumarate from L-phenylalanine: step 4/6. Its function is as follows. Involved in the catabolism of homogentisate (2,5-dihydroxyphenylacetate or 2,5-OH-PhAc), a central intermediate in the degradation of phenylalanine and tyrosine. Catalyzes the oxidative ring cleavage of the aromatic ring of homogentisate to yield maleylacetoacetate. This Rhodopseudomonas palustris (strain ATCC BAA-98 / CGA009) protein is Homogentisate 1,2-dioxygenase.